A 1041-amino-acid chain; its full sequence is Nuclear migration protein unc-83 (1041 aa).

3 disordered regions span residues V258–V283, I453–D498, and I613–S646. Positions Q456–R465 are enriched in basic residues. Positions I613 to D626 are enriched in basic and acidic residues. Coiled coils occupy residues R785 to A816 and K931 to M951. Positions T986 to V1041 constitute a KASH domain. A helical; Anchor for type IV membrane protein membrane pass occupies residues F1005 to F1024.

In terms of assembly, component of the unc-83-unc-84 LINC complex which contains at least unc-83 and unc-84. Within the unc-83-unc-84 LINC complex interacts with unc-84 (via C-terminus); the interaction is probably required to recruit unc-83 to the nuclear envelope where it then recruits dynein and kinesin-1 complexes to regulate nuclear migration. Interacts with bicd-1 and dlc-1. Interacts with nud-2 (via C-terminus); the interaction is direct, and is required for recruitment of nud-2 to the nuclear envelope. Interacts with klc-2; the interaction is direct. In terms of tissue distribution, predominantly expressed in migratory nuclei. Expressed in a variety of cell-types, including cells around the pharynx and in the uterus.

It is found in the nucleus membrane. The protein resides in the nucleus outer membrane. Its function is as follows. Cargo-specific adapter that is involved in nuclear migration during development and thereafter. Component of the unc-83-unc-84 LINC (LInker of Nucleoskeleton and Cytoskeleton) complex where it interacts with unc-84 to form a bridge connecting the nuclear envelope to the cytoskeleton which allows for nuclear transport along microtubules. Within the complex, connects the nuclear envelope to the microtubule cytoskeleton through the kinesin-1 light chain protein klc-2 (most likely within the Kinesin 1 motor complex) to regulate nuclear migrations. Moreover, within the complex, also recruits the large microtubule-associated bicd-1-dlc-1-egal-1 and lis-1-nud-2 complexes to the nuclear envelope to regulate both the bidirectional migration of nuclei and the extent of nuclear migrations. Not required for centrosome attachment to the nucleus. The protein is Nuclear migration protein unc-83 of Caenorhabditis elegans.